Reading from the N-terminus, the 382-residue chain is Glutamyl-tRNA reductase (382 aa).

Substrate-binding positions include 38–41 (TCNR), Ser85, 90–92 (ENQ), and Gln96. Residue Cys39 is the Nucleophile of the active site. 164 to 169 (GAGEMG) is a binding site for NADP(+).

It belongs to the glutamyl-tRNA reductase family. As to quaternary structure, homodimer.

The catalysed reaction is (S)-4-amino-5-oxopentanoate + tRNA(Glu) + NADP(+) = L-glutamyl-tRNA(Glu) + NADPH + H(+). It participates in porphyrin-containing compound metabolism; protoporphyrin-IX biosynthesis; 5-aminolevulinate from L-glutamyl-tRNA(Glu): step 1/2. Its function is as follows. Catalyzes the NADPH-dependent reduction of glutamyl-tRNA(Glu) to glutamate 1-semialdehyde (GSA). The polypeptide is Glutamyl-tRNA reductase (Methanococcus maripaludis (strain C6 / ATCC BAA-1332)).